Consider the following 489-residue polypeptide: Probable cytochrome P450 CYP44 (489 aa).

Residues 12-31 are disordered; the sequence is VEKCPYSPTSSPNTPPRTFS. A compositionally biased stretch (low complexity) spans 16 to 29; sequence PYSPTSSPNTPPRT. Cysteine 438 is a binding site for heme.

It belongs to the cytochrome P450 family. Heme is required as a cofactor.

Cytochromes P450 are a group of heme-thiolate monooxygenases. They oxidize a variety of structurally unrelated compounds, including steroids, fatty acids, and xenobiotics. In Caenorhabditis elegans, this protein is Probable cytochrome P450 CYP44 (cyp-44A1).